A 319-amino-acid polypeptide reads, in one-letter code: Transaldolase (319 aa).

The active-site Schiff-base intermediate with substrate is Lys-132.

Belongs to the transaldolase family. Type 1 subfamily. Homodimer.

The protein resides in the cytoplasm. It carries out the reaction D-sedoheptulose 7-phosphate + D-glyceraldehyde 3-phosphate = D-erythrose 4-phosphate + beta-D-fructose 6-phosphate. It participates in carbohydrate degradation; pentose phosphate pathway; D-glyceraldehyde 3-phosphate and beta-D-fructose 6-phosphate from D-ribose 5-phosphate and D-xylulose 5-phosphate (non-oxidative stage): step 2/3. In terms of biological role, transaldolase is important for the balance of metabolites in the pentose-phosphate pathway. The protein is Transaldolase of Alteromonas mediterranea (strain DSM 17117 / CIP 110805 / LMG 28347 / Deep ecotype).